Consider the following 289-residue polypeptide: Heme oxygenase 1 (289 aa).

Positions 1-12 are enriched in polar residues; it reads MERPQPDSSMPQ. The interval 1-24 is disordered; that stretch reads MERPQPDSSMPQDLSEALKEATKE. The Cytoplasmic portion of the chain corresponds to 1-266; sequence MERPQPDSSM…KPQPSVLSQA (266 aa). The heme b site is built by Lys-19, His-26, Tyr-135, and Arg-184. A disordered region spans residues 239-261; it reads RRAGSKVQDLAPTKASRGKPQPS. Ser-243 carries the phosphoserine modification. A helical; Anchor for type IV membrane protein transmembrane segment spans residues 267-289; it reads PLLRWVLTLSFLVATVAVGLYAM.

It belongs to the heme oxygenase family. Homodimer and higher order homooligomer. Oligomerization is crucial for its stability and function in the endoplasmic reticulum. Interacts with FLVCR2; this interaction is potentiated in the presence of heme. A soluble form arises by proteolytic removal of the membrane anchor.

Its subcellular location is the endoplasmic reticulum membrane. The catalysed reaction is heme b + 3 reduced [NADPH--hemoprotein reductase] + 3 O2 = biliverdin IXalpha + CO + Fe(2+) + 3 oxidized [NADPH--hemoprotein reductase] + 3 H2O + H(+). Inhibited by metalloporphyrins such as Sn-, Co-, Mn- and Zn-protoporphyrins. Catalyzes the oxidative cleavage of heme at the alpha-methene bridge carbon, released as carbon monoxide (CO), to generate biliverdin IXalpha, while releasing the central heme iron chelate as ferrous iron. Affords protection against programmed cell death and this cytoprotective effect relies on its ability to catabolize free heme and prevent it from sensitizing cells to undergo apoptosis. Functionally, catalyzes the oxidative cleavage of heme at the alpha-methene bridge carbon, released as carbon monoxide (CO), to generate biliverdin IXalpha, while releasing the central heme iron chelate as ferrous iron. In Bos taurus (Bovine), this protein is Heme oxygenase 1 (HMOX1).